The chain runs to 176 residues: Ribosome maturation factor RimM (176 aa).

Residues 93-166 (EGEYYHADLI…RVVIEMPGEI (74 aa)) form the PRC barrel domain.

It belongs to the RimM family. In terms of assembly, binds ribosomal protein uS19.

Its subcellular location is the cytoplasm. In terms of biological role, an accessory protein needed during the final step in the assembly of 30S ribosomal subunit, possibly for assembly of the head region. Essential for efficient processing of 16S rRNA. May be needed both before and after RbfA during the maturation of 16S rRNA. It has affinity for free ribosomal 30S subunits but not for 70S ribosomes. This chain is Ribosome maturation factor RimM, found in Rhodopseudomonas palustris (strain BisA53).